Reading from the N-terminus, the 152-residue chain is Ribosome maturation factor RimP (152 aa).

This sequence belongs to the RimP family.

It is found in the cytoplasm. Required for maturation of 30S ribosomal subunits. The sequence is that of Ribosome maturation factor RimP from Citrobacter koseri (strain ATCC BAA-895 / CDC 4225-83 / SGSC4696).